Consider the following 335-residue polypeptide: MNLINEKLNNLENSATKSPKEAVVLLNMGGPNSLYEVGVFLKNMFDDPFILTIKNNFMRKMVGKMIVNSRIEKSKKIYEKLGGKSPLTPITFALTERLNELDPSRFYTYAMRYTPPYASMVLQDLALKEIESLVFFSMYPQYSSTTTLSSFNDAFNALKSLETFRPKVRVIERFYADKKLNEIILNTILSALNNCKSQDFVLIFSVHGLPKSIVDAGDTYQQECEHHVSLLKELMQQKNIPFKEVLLSYQSKLGPMKWLEPSTEELIEKHRKSNIIIYPLAFTIDNSETLYELDMQYRLMAERLAVKEYLVCPCLNDSIEFAKFIIELVKNLKSE.

Fe cation-binding residues include histidine 207 and glutamate 288.

The protein belongs to the ferrochelatase family.

The protein localises to the cytoplasm. The enzyme catalyses heme b + 2 H(+) = protoporphyrin IX + Fe(2+). Its pathway is porphyrin-containing compound metabolism; protoheme biosynthesis; protoheme from protoporphyrin-IX: step 1/1. In terms of biological role, catalyzes the ferrous insertion into protoporphyrin IX. The chain is Ferrochelatase from Helicobacter pylori (strain J99 / ATCC 700824) (Campylobacter pylori J99).